The primary structure comprises 439 residues: Ribulose bisphosphate carboxylase/oxygenase activase, chloroplastic (439 aa).

167–174 contributes to the ATP binding site; it reads GGKGQGKS.

Belongs to the RuBisCO activase family.

It localises to the plastid. The protein resides in the chloroplast stroma. Functionally, activation of RuBisCO (ribulose-1,5-bisphosphate carboxylase/oxygenase; EC 4.1.1.39) involves the ATP-dependent carboxylation of the epsilon-amino group of lysine leading to a carbamate structure. This Vigna radiata var. radiata (Mung bean) protein is Ribulose bisphosphate carboxylase/oxygenase activase, chloroplastic (RCA).